Consider the following 404-residue polypeptide: Putative gustatory receptor 94a (404 aa).

The Cytoplasmic portion of the chain corresponds to 1-11 (MDFTSDYAHRR). The chain crosses the membrane as a helical span at residues 12–32 (MVKFLTIILIGFMTVFGLLAN). Residues 33-43 (RYRAGRRERFR) lie on the Extracellular side of the membrane. A helical membrane pass occupies residues 44-64 (FSKANLAFASLWAIAFSLVYG). Residues 65-133 (RQIYKEYQEG…RLDSRSLYIS (69 aa)) lie on the Cytoplasmic side of the membrane. Residues 134–154 (IVLALVKTVAFPLTIEVAFIL) form a helical membrane-spanning segment. Topologically, residues 155–171 (QQRRQHPEMSLIWTLYR) are extracellular. The helical transmembrane segment at 172–192 (LFPLIISNFLNNCYFGAMVVV) threads the bilayer. At 193-260 (KEILYALNRR…HSGKYLTPMS (68 aa)) the chain is on the cytoplasmic side. A helical transmembrane segment spans residues 261-281 (LSMILSLICHLLGITVGFYSL). The Extracellular portion of the chain corresponds to 282–296 (YYAIADTLIMGKPYD). Residues 297-317 (GLGSLINLVFLSISLAEITLL) form a helical membrane-spanning segment. The Cytoplasmic segment spans residues 318–376 (THLCNHLLVATRRSAVILQEMNLQHADSRYRQAVHGFTLLVTVTKYQIKPLGLYELDMR). A helical membrane pass occupies residues 377 to 397 (LISNVFSAVASFLLILVQADL). Residues 398–404 (SQRFKMQ) lie on the Extracellular side of the membrane.

It belongs to the insect chemoreceptor superfamily. Gustatory receptor (GR) family. Gr22e subfamily. As to expression, in larvae, is expressed in neurons of the terminal external chemosensory organ.

Its subcellular location is the cell membrane. Probable gustatory receptor which mediates acceptance or avoidance behavior, depending on its substrates. The sequence is that of Putative gustatory receptor 94a (Gr94a) from Drosophila melanogaster (Fruit fly).